Consider the following 338-residue polypeptide: Transcription factor GRA2 (338 aa).

Disordered stretches follow at residues cysteine 171–alanine 230 and threonine 256–serine 277. Residues serine 174–glycine 203 are compositionally biased toward polar residues. Positions lysine 223–arginine 236 are basic motif. In terms of domain architecture, bHLH spans lysine 223–leucine 303. Residues alanine 237 to leucine 303 are helix-loop-helix motif.

The protein resides in the nucleus. Its function is as follows. Transcription factor that specifically regulates the expression of the gene cluster that mediates the biosynthesis of gramillins A and B, bicyclic lipopeptides that induce cell death in maize leaves but not in wheat leaves. The polypeptide is Transcription factor GRA2 (GRA2) (Gibberella zeae (strain ATCC MYA-4620 / CBS 123657 / FGSC 9075 / NRRL 31084 / PH-1) (Wheat head blight fungus)).